Here is a 280-residue protein sequence, read N- to C-terminus: Dual adapter for phosphotyrosine and 3-phosphotyrosine and 3-phosphoinositide (280 aa).

Residues 35-129 (WYHGNLTRHA…GTLMVLKHPY (95 aa)) enclose the SH2 domain. A Phosphotyrosine modification is found at Tyr139. Ser141 carries the phosphoserine modification. One can recognise a PH domain in the interval 164–259 (LGTKEGYLTK…WIKILRWKLS (96 aa)).

Interacts with PtdIns(3,4,5)P3 and PLCG2. Phosphorylated on tyrosine residues.

Its subcellular location is the cytoplasm. The protein localises to the membrane. Functionally, may act as a B-cell-associated adapter that regulates B-cell antigen receptor (BCR)-signaling downstream of PI3K. The protein is Dual adapter for phosphotyrosine and 3-phosphotyrosine and 3-phosphoinositide (Dapp1) of Mus musculus (Mouse).